The sequence spans 344 residues: WW domain binding protein 1-like (344 aa).

Residues 42–62 (LWWFWLVWTIIIILSCCCVCH) form a helical membrane-spanning segment. Disordered stretches follow at residues 132–250 (LLPP…RFTG) and 302–321 (CLSSEGQAREHGHPHLPRPP). Low complexity predominate over residues 145–173 (PGADQPQGSQGAQSSPLSGPSRSSTRPPS). At S173 the chain carries Phosphoserine. Residues 212 to 228 (LDRDSECKEELLKDSSS) are compositionally biased toward basic and acidic residues.

It localises to the membrane. This Rattus norvegicus (Rat) protein is WW domain binding protein 1-like (Wbp1l).